The primary structure comprises 605 residues: Insulin-like growth factor-binding protein complex acid labile subunit (605 aa).

Residues Met-1–Gly-27 form the signal peptide. The 43-residue stretch at Thr-32–Gly-74 folds into the LRRNT domain. Intrachain disulfides connect Cys-41–Cys-47 and Cys-45–Cys-60. 3 N-linked (GlcNAc...) asparagine glycosylation sites follow: Asn-64, Asn-85, and Asn-96. LRR repeat units follow at residues Gly-75–Asn-96, Ser-99–Gly-120, Asn-123–Tyr-144, Ala-147–Gly-168, Asn-171–Gly-192, Gly-195–Gly-216, Glu-219–Gln-240, Arg-243–Gly-264, Ala-267–Gly-288, Gly-291–Asp-312, Phe-315–Gly-336, Gln-339–Gly-360, Asn-363–Gly-384, Lys-387–Gly-408, Gly-411–Gly-432, Glu-435–Gly-456, Lys-459–Pro-480, Arg-483–Ser-504, and Arg-507–Leu-528. Residue Asn-368 is glycosylated (N-linked (GlcNAc...) asparagine). Asn-515 is a glycosylation site (N-linked (GlcNAc...) asparagine). Residues Asn-536–Cys-605 enclose the LRRCT domain. 3 disulfide bridges follow: Cys-540/Cys-583, Cys-542/Cys-605, and Cys-566/Cys-571. Asn-580 is a glycosylation site (N-linked (GlcNAc...) asparagine).

In terms of assembly, forms a ternary complex with IGF1 and IGFBP3.

The protein localises to the secreted. Its subcellular location is the extracellular space. Functionally, involved in protein-protein interactions that result in protein complexes, receptor-ligand binding or cell adhesion. The sequence is that of Insulin-like growth factor-binding protein complex acid labile subunit (IGFALS) from Papio hamadryas (Hamadryas baboon).